A 106-amino-acid chain; its full sequence is ATP-dependent Clp protease adapter protein ClpS (106 aa).

This sequence belongs to the ClpS family. As to quaternary structure, binds to the N-terminal domain of the chaperone ClpA.

Involved in the modulation of the specificity of the ClpAP-mediated ATP-dependent protein degradation. The protein is ATP-dependent Clp protease adapter protein ClpS of Yersinia enterocolitica serotype O:8 / biotype 1B (strain NCTC 13174 / 8081).